Here is a 1134-residue protein sequence, read N- to C-terminus: Ubinuclein-1 (1134 aa).

2 disordered regions span residues 1-38 (MSEPHRVQFTSLPGSLNPAFLKKSRKEEAGAGEQHQDC) and 78-98 (LQPGDKKKDLSDPFNDEEKER). Residues 1–166 (MSEPHRVQFT…YGGFYINSGT (166 aa)) are sufficient for interaction with HIRA. Basic and acidic residues-rich tracts occupy residues 25–38 (RKEEAGAGEQHQDC) and 81–98 (GDKKKDLSDPFNDEEKER). A Phosphothreonine modification is found at T166. The tract at residues 171 to 220 (QASESEDDFIKEKKKKSPKKRKLKEGGEKIKKKKKDDTYDKEKKSKKSKF) is disordered. A phosphoserine mark is found at S173 and S175. Residues 182–193 (EKKKKSPKKRKL) show a composition bias toward basic residues. A compositionally biased stretch (basic and acidic residues) spans 194–213 (KEGGEKIKKKKKDDTYDKEK). K222 is modified (N6-acetyllysine). Residues 253–268 (QKEKEAQKKREEEHKP) show a composition bias toward basic and acidic residues. Disordered stretches follow at residues 253–282 (QKEKEAQKKREEEHKPVAVPSAEAQGLREL), 321–358 (SESPEGSPFRDMDDGSDSLGVGLDQEFRQPSSLPEGLP), 480–504 (EEEKDKEQRDRICSDEEEDEEKGGR), and 594–660 (PSKI…LEDS). Phosphoserine occurs at positions 323, 336, 338, and 493. A coiled-coil region spans residues 479-542 (LEEEKDKEQR…SQDLERNNKA (64 aa)). 2 stretches are compositionally biased toward basic and acidic residues: residues 480–493 (EEEKDKEQRDRICS) and 598–610 (KVKESSTKPDKKV). A phosphoserine mark is found at S660 and S677. 2 disordered regions span residues 712–836 (TEEK…SPTQ) and 852–986 (QGFH…GVAK). Low complexity-rich tracts occupy residues 792-804 (GPQVAVPVPGPQV) and 856-891 (PSAPATSGGLSASSSSSHKTPASSSSALSHPAKPHS). Polar residues predominate over residues 892 to 905 (VSSAGSSYKNNPFA). Residues 906–932 (SSISKHGVSSGSSSSGGTPVQSSVSGS) show a composition bias toward low complexity. Polar residues predominate over residues 941 to 950 (SVGQATSRPV). A compositionally biased stretch (gly residues) spans 973 to 982 (PNGDSSGGTQ). Phosphoserine is present on S1025. Residues 1093 to 1108 (GLHSSPPHAAPLPHAA) show a composition bias toward low complexity. A disordered region spans residues 1093 to 1134 (GLHSSPPHAAPLPHAAVPTHIPQSLPGASQLHGKGPAVPRKL).

It belongs to the ubinuclein family. Component of a complex that includes at least ASF1A, CABIN1, HIRA, histone H3.3 and UBN1. Interacts with HIRA (via WD repeat domain); the interaction is direct. Interacts with ASF1A, CEBPA, TJP1, TJP2 and TJP3. In terms of assembly, (Microbial infection) Interacts with Epstein-Barr virus BZLF1. As to expression, ubiquitous. Also expressed in numerous tumors and cancer cell lines.

It localises to the nucleus. Its subcellular location is the nucleoplasm. The protein resides in the PML body. The protein localises to the cell junction. It is found in the tight junction. Acts as a novel regulator of senescence. Involved in the formation of senescence-associated heterochromatin foci (SAHF), which represses expression of proliferation-promoting genes. Binds to proliferation-promoting genes. May be required for replication-independent chromatin assembly. This chain is Ubinuclein-1 (UBN1), found in Homo sapiens (Human).